The sequence spans 448 residues: Proton extrusion protein PxcA (448 aa).

The next 4 helical transmembrane spans lie at 231–251 (ILLL…FFLI), 323–343 (IDSI…VLVL), 372–392 (LIIL…WEVI), and 408–428 (FNFL…KYWI).

This sequence belongs to the CemA family.

The protein resides in the cell inner membrane. Required for H(+) efflux immediately after light irradiation to form a rapid H(+) concentration gradient across the thylakoid membranes. Together with PxcL, contributes to transient H(+) uptake following dark to light transition. The protein is Proton extrusion protein PxcA of Rippkaea orientalis (strain PCC 8801 / RF-1) (Cyanothece sp. (strain PCC 8801)).